Here is a 98-residue protein sequence, read N- to C-terminus: Aspartyl/glutamyl-tRNA(Asn/Gln) amidotransferase subunit C (98 aa).

This sequence belongs to the GatC family. Heterotrimer of A, B and C subunits.

The enzyme catalyses L-glutamyl-tRNA(Gln) + L-glutamine + ATP + H2O = L-glutaminyl-tRNA(Gln) + L-glutamate + ADP + phosphate + H(+). It carries out the reaction L-aspartyl-tRNA(Asn) + L-glutamine + ATP + H2O = L-asparaginyl-tRNA(Asn) + L-glutamate + ADP + phosphate + 2 H(+). Functionally, allows the formation of correctly charged Asn-tRNA(Asn) or Gln-tRNA(Gln) through the transamidation of misacylated Asp-tRNA(Asn) or Glu-tRNA(Gln) in organisms which lack either or both of asparaginyl-tRNA or glutaminyl-tRNA synthetases. The reaction takes place in the presence of glutamine and ATP through an activated phospho-Asp-tRNA(Asn) or phospho-Glu-tRNA(Gln). This chain is Aspartyl/glutamyl-tRNA(Asn/Gln) amidotransferase subunit C, found in Kocuria rhizophila (strain ATCC 9341 / DSM 348 / NBRC 103217 / DC2201).